The chain runs to 136 residues: Large ribosomal subunit protein uL16c (136 aa).

The tract at residues 1-20 (MLSPKRTKFRKQHRGRMKGK) is disordered.

This sequence belongs to the universal ribosomal protein uL16 family. In terms of assembly, part of the 50S ribosomal subunit.

The protein resides in the plastid. It is found in the chloroplast. The polypeptide is Large ribosomal subunit protein uL16c (Brachypodium distachyon (Purple false brome)).